The sequence spans 540 residues: Membrane protein insertase YidC (540 aa).

Residues 6–26 form a helical membrane-spanning segment; it reads NILLIALALVSFLLFQQWQVA. Residues 36-63 are disordered; that stretch reads QAQSSSTLPAPSFADELDPVPGQQQASA. Helical transmembrane passes span 342 to 362, 417 to 437, 455 to 475, and 496 to 516; these read AFIQ…TFIV, LGGC…YWAL, LSAQ…MFLI, and PVMF…YWLV.

Belongs to the OXA1/ALB3/YidC family. Type 1 subfamily. Interacts with the Sec translocase complex via SecD. Specifically interacts with transmembrane segments of nascent integral membrane proteins during membrane integration.

The protein localises to the cell inner membrane. Required for the insertion and/or proper folding and/or complex formation of integral membrane proteins into the membrane. Involved in integration of membrane proteins that insert both dependently and independently of the Sec translocase complex, as well as at least some lipoproteins. Aids folding of multispanning membrane proteins. The chain is Membrane protein insertase YidC from Vibrio campbellii (strain ATCC BAA-1116).